A 269-amino-acid polypeptide reads, in one-letter code: Protein CURLY FLAG LEAF 1 (269 aa).

Residues S17 to E44 are disordered. The EAR signature appears at T47 to S52. Residues V54 to S88 form the WW domain. Disordered regions lie at residues T83 to T133 and G174 to G218. 3 stretches are compositionally biased toward low complexity: residues R87–R106, A121–T133, and S180–S202. Over residues T203 to E212 the composition is skewed to polar residues.

Binds to HDG1.

Negatively regulates the cuticle development probably by interacting with the HD-ZIP IV transcription factor HDG1. The sequence is that of Protein CURLY FLAG LEAF 1 from Oryza sativa subsp. indica (Rice).